A 698-amino-acid polypeptide reads, in one-letter code: Methionine--tRNA ligase (698 aa).

Positions 21-31 match the 'HIGH' region motif; it reads PYANGPLHFGH. The Zn(2+) site is built by cysteine 153, cysteine 156, cysteine 166, and cysteine 169. Residues 341–345 carry the 'KMSKS' region motif; it reads QFSKS. Lysine 344 contacts ATP. In terms of domain architecture, tRNA-binding spans 599–698; that stretch reads DFRKLDLRVG…EDVAPGSLVS (100 aa).

This sequence belongs to the class-I aminoacyl-tRNA synthetase family. MetG type 1 subfamily. Homodimer. Requires Zn(2+) as cofactor.

Its subcellular location is the cytoplasm. It catalyses the reaction tRNA(Met) + L-methionine + ATP = L-methionyl-tRNA(Met) + AMP + diphosphate. Functionally, is required not only for elongation of protein synthesis but also for the initiation of all mRNA translation through initiator tRNA(fMet) aminoacylation. The protein is Methionine--tRNA ligase of Protochlamydia amoebophila (strain UWE25).